Here is a 1470-residue protein sequence, read N- to C-terminus: Isonitrile lipopeptide synthase (1470 aa).

Positions 584–603 are disordered; it reads PEPESQEAARPTAPAPTAPA. The Carrier domain maps to 974-1049; it reads AHDSTLERTI…ELARFLKQQE (76 aa). At Ser-1009 the chain carries O-(pantetheine 4'-phosphoryl)serine. The span at 1049-1059 shows a compositional bias: low complexity; it reads EQQAHAQVQPR. Positions 1049 to 1070 are disordered; that stretch reads EQQAHAQVQPRPAGPGLPPTLL.

The protein belongs to the ATP-dependent AMP-binding enzyme family. Requires pantetheine 4'-phosphate as cofactor.

It catalyses the reaction 2 a (3R)-3-isocyanyl-fatty acyl-[ACP] + L-lysine + ATP + 2 NADPH = an isonitrile lipopeptide + 2 holo-[ACP] + AMP + diphosphate + 2 NADP(+). The catalysed reaction is 2 (3R)-3-isocyanylbutanoyl-[ACP] + L-lysine + ATP + 2 NADPH = (2S)-2,6-bis[(3R)-3-isocyanobutanamido]hexan-1-ol + 2 holo-[ACP] + AMP + diphosphate + 2 NADP(+). Its function is as follows. Nonribosomal peptide synthetase (NRPS) involved in the biosynthesis of a unique class of isonitrile lipopeptides (INLPs). Catalyzes the final step in the pathway, i.e. the condensation of a (3R)-3-isocyanyl-fatty acyl-[ACP] to both amino groups of a lysine, producing isonitrile lipopeptides. Can use (3R)-3-isocyanylbutanoyl-[ACP] as substrate, leading to (2S)-2,6-bis[(3R)-3-isocyanobutanamido]hexan-1-ol. In Streptomyces coeruleorubidus, this protein is Isonitrile lipopeptide synthase.